The chain runs to 742 residues: Protein-lysine N-methyltransferase SMYD4 (742 aa).

An S-adenosyl-L-methionine-binding site is contributed by 110–112 (RSA). The region spanning 230-569 (SSLSLNFSTE…SGQEIFHCYG (340 aa)) is the SET domain. Positions 295, 298, 308, 311, 317, 321, 330, and 334 each coordinate Zn(2+). The MYND-type zinc finger occupies 295-334 (CHHCLKQLLASIPCCGCSYAKYCSQNCADVAWEQYHRTEC). S-adenosyl-L-methionine contacts are provided by residues asparagine 418, 534 to 535 (NH), and tyrosine 568.

It belongs to the class V-like SAM-binding methyltransferase superfamily.

The protein resides in the nucleus. The protein localises to the cytoplasm. It carries out the reaction L-lysyl-[protein] + S-adenosyl-L-methionine = N(6)-methyl-L-lysyl-[protein] + S-adenosyl-L-homocysteine + H(+). In terms of biological role, protein-lysine N-methyltransferase. Monomethylates PRMT5, modulating its transcriptional activity. May also act as a histone methyltransferase. Plays a critical role in cardiac development. Acts as a key epigenetic regulator of gene expression during cardiac development via its dual activities as a methyltransferase and negative regulator of HDAC1. In Gallus gallus (Chicken), this protein is Protein-lysine N-methyltransferase SMYD4 (SMYD4).